The chain runs to 554 residues: CTP synthase (554 aa).

An amidoligase domain region spans residues 1-265 (MTPLIFVTGG…DELVIDQFKL (265 aa)). S13 lines the CTP pocket. Position 13 (S13) interacts with UTP. ATP-binding positions include 14–19 (SLGKGI) and D71. D71 and E139 together coordinate Mg(2+). Residues 146 to 148 (DIE), 186 to 191 (KTKPTQ), and K222 contribute to the CTP site. UTP is bound by residues 186 to 191 (KTKPTQ) and K222. One can recognise a Glutamine amidotransferase type-1 domain in the interval 292–545 (TIAVVGKYVD…VRAAREKKAG (254 aa)). Residue G353 participates in L-glutamine binding. C380 functions as the Nucleophile; for glutamine hydrolysis in the catalytic mechanism. L-glutamine contacts are provided by residues 381–384 (YGMQ), E404, and R471. Catalysis depends on residues H518 and E520.

This sequence belongs to the CTP synthase family. As to quaternary structure, homotetramer.

The catalysed reaction is UTP + L-glutamine + ATP + H2O = CTP + L-glutamate + ADP + phosphate + 2 H(+). The enzyme catalyses L-glutamine + H2O = L-glutamate + NH4(+). It catalyses the reaction UTP + NH4(+) + ATP = CTP + ADP + phosphate + 2 H(+). Its pathway is pyrimidine metabolism; CTP biosynthesis via de novo pathway; CTP from UDP: step 2/2. With respect to regulation, allosterically activated by GTP, when glutamine is the substrate; GTP has no effect on the reaction when ammonia is the substrate. The allosteric effector GTP functions by stabilizing the protein conformation that binds the tetrahedral intermediate(s) formed during glutamine hydrolysis. Inhibited by the product CTP, via allosteric rather than competitive inhibition. Catalyzes the ATP-dependent amination of UTP to CTP with either L-glutamine or ammonia as the source of nitrogen. Regulates intracellular CTP levels through interactions with the four ribonucleotide triphosphates. The sequence is that of CTP synthase from Xanthomonas campestris pv. campestris (strain B100).